The following is a 745-amino-acid chain: Single-minded homolog 1-A (745 aa).

The bHLH domain maps to 1-53; sequence MKEKSKNAGRTRREKENSEFYELAKLLPLPSAITSQSDKASIIRLTTSYLKMR. 2 PAS domains span residues 77–147 and 218–288; these read GREL…QPYH and PPSA…LVKG. One can recognise a Single-minded C-terminal domain in the interval 336–745; it reads EYKGLQLSLD…GTSVIITNGS (410 aa). The span at 350-364 shows a compositional bias: polar residues; the sequence is TKPSFTYNSPSNPVT. Disordered stretches follow at residues 350 to 413 and 529 to 563; these read TKPS…LTDS and EDSAVSSAPDGGSASDSGDRFRADQCRSSPQEPSK. The Nuclear localization signal motif lies at 368-387; sequence RVGKSRVSRTKTKTRLSPYS. A compositionally biased stretch (basic residues) spans 369–381; sequence VGKSRVSRTKTKT. Residues 532-544 are compositionally biased toward low complexity; it reads AVSSAPDGGSASD.

Efficient DNA binding requires dimerization with another bHLH protein. Heterodimer of sim1a and arnt. In terms of tissue distribution, expressed in embryonic forebrain at the eleven somite stage. Detected in brain throughout embryonic development.

Its subcellular location is the nucleus. Functionally, transcriptional factor that may have pleiotropic effects during embryogenesis and in the adult. In Danio rerio (Zebrafish), this protein is Single-minded homolog 1-A (sim1a).